Here is a 345-residue protein sequence, read N- to C-terminus: 3-dehydroquinate synthase (345 aa).

It belongs to the archaeal-type DHQ synthase family.

The enzyme catalyses 2-amino-2,3,7-trideoxy-D-lyxo-hept-6-ulosonate + NAD(+) + H2O = 3-dehydroquinate + NH4(+) + NADH + H(+). In terms of biological role, catalyzes the oxidative deamination and cyclization of 2-amino-3,7-dideoxy-D-threo-hept-6-ulosonic acid (ADH) to yield 3-dehydroquinate (DHQ), which is fed into the canonical shikimic pathway of aromatic amino acid biosynthesis. In Methanocorpusculum labreanum (strain ATCC 43576 / DSM 4855 / Z), this protein is 3-dehydroquinate synthase.